The sequence spans 147 residues: Hemoglobin subunit beta (147 aa).

Val2 carries the post-translational modification N-acetylvaline. Residues 3 to 147 form the Globin domain; that stretch reads HLSAEEKEAV…VANALAHKYH (145 aa). Phosphoserine is present on Ser45. The residue at position 60 (Lys60) is an N6-acetyllysine. His64 serves as a coordination point for heme b. Lys83 is modified (N6-acetyllysine). Residue His93 coordinates heme b. The residue at position 94 (Cys94) is an S-nitrosocysteine. N6-acetyllysine is present on Lys145.

It belongs to the globin family. Heterotetramer of two alpha chains and two beta chains. Red blood cells.

In terms of biological role, involved in oxygen transport from the lung to the various peripheral tissues. The polypeptide is Hemoglobin subunit beta (HBB) (Sus scrofa (Pig)).